Here is a 241-residue protein sequence, read N- to C-terminus: Small ribosomal subunit protein uS2 (241 aa).

Belongs to the universal ribosomal protein uS2 family.

This chain is Small ribosomal subunit protein uS2, found in Klebsiella pneumoniae subsp. pneumoniae (strain ATCC 700721 / MGH 78578).